The chain runs to 182 residues: Ribulose bisphosphate carboxylase small subunit, chloroplastic 1 (182 aa).

The N-terminal 42 residues, 1–42, are a transit peptide targeting the chloroplast; that stretch reads MASIMMNKSVVLSKECAKPLATPKVTLNKRGFATTIATKNRE.

Belongs to the RuBisCO small chain family. As to quaternary structure, heterohexadecamer of 8 large and 8 small subunits.

The protein localises to the plastid. It localises to the chloroplast. Functionally, ruBisCO catalyzes two reactions: the carboxylation of D-ribulose 1,5-bisphosphate, the primary event in carbon dioxide fixation, as well as the oxidative fragmentation of the pentose substrate. Both reactions occur simultaneously and in competition at the same active site. Although the small subunit is not catalytic it is essential for maximal activity. In Acetabularia acetabulum (Mermaid's wine glass), this protein is Ribulose bisphosphate carboxylase small subunit, chloroplastic 1.